The sequence spans 542 residues: MAAKEIKFSTEAREKMLRGVDILANAVKATLGPKGRNVVIDKSFGAPRITKDGVSVAKEIELEDKFENMGAQMVREVASKTSDIAGDGTTTATVLAQAIVKEGAKAVTSGMNPMDLKRGIDLAVAAIVAELKANARKISNNSEIAQVGTISANGDAEIGRFLAEAMEKVGNDGVITVEEAKTAETELEVVEGMQFDRGYLSPYFVTNADKMRVEFEDPYILIHEKKLSNLQSMLPVLEAVVQSSKPLLIIAEDVEGEALATLVVNKLRGGLKIAAVKAPGFGDRRKAMLEDIAILTAGTVISEDLGIKLESVTLDMLGRAKKVSIEKENTTIVDGSGAKTDIEGRVAQIKAQIEETTSDYDREKLQERLAKLAGGVAVIRVGGSTEVEVKEKKDRVDDALHATRAAVEEGILPGGGVALLRAVKALDAVKTANGDQRVGVDIVRRAVEAPARQIAENAGAEGSVIVGKLREKSEFSYGWNAQTGEYGDLYAQGVIDPAKVVRTALQDAASIAGLLVTTEAMIAEKPKKDAPPPMPAGPGMDF.

Residues 30-33 (TLGP), Lys-51, 87-91 (DGTTT), Gly-415, and Asp-496 contribute to the ATP site.

The protein belongs to the chaperonin (HSP60) family. As to quaternary structure, forms a cylinder of 14 subunits composed of two heptameric rings stacked back-to-back. Interacts with the co-chaperonin GroES.

It is found in the cytoplasm. The catalysed reaction is ATP + H2O + a folded polypeptide = ADP + phosphate + an unfolded polypeptide.. Together with its co-chaperonin GroES, plays an essential role in assisting protein folding. The GroEL-GroES system forms a nano-cage that allows encapsulation of the non-native substrate proteins and provides a physical environment optimized to promote and accelerate protein folding. In Rhizobium leguminosarum, this protein is Chaperonin GroEL 2.